Consider the following 571-residue polypeptide: MNIQKFLKKKIKKICIKLGLPENFNPIIQKNIKKKNIDYQINGIIKLKKKKSNYHYKLAKKISYYMNKSKIYKKISISKPGFINITLDSNWICTNINNMFIAKNFNISFKKPKKIIIDYSSPNIAKEMHVGHLRSTILGDTTARILKFLGHNVIKQNHIGDWGIQFGMLITQLKLESKISFKNIEKIYKKSYLNYKKNPIFFKKTKKNVVKLQKKDKKCIYIWKKIVKKSIKKNNKVYKKLNVSLKKKDIRGESFYNFMLPGIISDLKKKKIAVNYQGCVIVYLKNFKNRLGKKMGVVIQKKDGAFLYTTTDIACLKYRCKTLKADRIIYYIDNRQKQHLLQIWNIAKKAKYFTKKILLEHHSFGMILHKNKKPFKTRNGDTIKLIKLLNKGVTKAKEKIKKKNRKIKKKELKKIAHNIGIGAIKYFDLSKKRKLDYIFDWDKMLSLEGNTAPYIQYAYIRIKSIIKKNTTIFQNDKYKINIFTSFERQLIFSIFQFEEIIHILEKKGTPHLMCNYLYDLSGKFSKFYENCSILNAKEKHIKISRIKLSILTSKIIKKCLYFLGIKTVSKM.

Positions 122–132 (PNIAKEMHVGH) match the 'HIGH' region motif.

The protein belongs to the class-I aminoacyl-tRNA synthetase family. Monomer.

The protein resides in the cytoplasm. It carries out the reaction tRNA(Arg) + L-arginine + ATP = L-arginyl-tRNA(Arg) + AMP + diphosphate. The chain is Arginine--tRNA ligase from Buchnera aphidicola subsp. Cinara cedri (strain Cc).